The primary structure comprises 201 residues: Histidinol dehydrogenase (201 aa).

The protein belongs to the histidinol dehydrogenase family. Homodimer. The cofactor is Zn(2+).

The enzyme catalyses L-histidinol + 2 NAD(+) + H2O = L-histidine + 2 NADH + 3 H(+). It functions in the pathway amino-acid biosynthesis; L-histidine biosynthesis; L-histidine from 5-phospho-alpha-D-ribose 1-diphosphate: step 9/9. Functionally, catalyzes the sequential NAD-dependent oxidations of L-histidinol to L-histidinaldehyde and then to L-histidine. This is Histidinol dehydrogenase (hisD) from Buchnera aphidicola subsp. Schlechtendalia chinensis.